A 162-amino-acid chain; its full sequence is Shikimate kinase (162 aa).

Position 10-15 (10-15 (GAGKST)) interacts with ATP. Position 14 (Ser14) interacts with Mg(2+). Residues Asp28, Arg52, and Gly73 each contribute to the substrate site. ATP is bound at residue Arg113. Residue Arg129 coordinates substrate.

This sequence belongs to the shikimate kinase family. In terms of assembly, monomer. Requires Mg(2+) as cofactor.

It localises to the cytoplasm. It catalyses the reaction shikimate + ATP = 3-phosphoshikimate + ADP + H(+). The protein operates within metabolic intermediate biosynthesis; chorismate biosynthesis; chorismate from D-erythrose 4-phosphate and phosphoenolpyruvate: step 5/7. Catalyzes the specific phosphorylation of the 3-hydroxyl group of shikimic acid using ATP as a cosubstrate. The chain is Shikimate kinase from Lactococcus lactis subsp. cremoris (strain SK11).